A 68-amino-acid polypeptide reads, in one-letter code: UPF0253 protein VF_0662 (68 aa).

The protein belongs to the UPF0253 family.

The protein is UPF0253 protein VF_0662 of Aliivibrio fischeri (strain ATCC 700601 / ES114) (Vibrio fischeri).